The primary structure comprises 127 residues: ATP synthase epsilon chain (127 aa).

Belongs to the ATPase epsilon chain family. F-type ATPases have 2 components, CF(1) - the catalytic core - and CF(0) - the membrane proton channel. CF(1) has five subunits: alpha(3), beta(3), gamma(1), delta(1), epsilon(1). CF(0) has three main subunits: a, b and c.

The protein localises to the cell inner membrane. In terms of biological role, produces ATP from ADP in the presence of a proton gradient across the membrane. The chain is ATP synthase epsilon chain from Leptospira interrogans serogroup Icterohaemorrhagiae serovar copenhageni (strain Fiocruz L1-130).